Reading from the N-terminus, the 164-residue chain is MERSASVGVNDGRFGGNQFYSPSFSSSSSSSSMRHVNYSCGSCGYELNLSSTNRITSTIGSKYGKSMKSGIISFFNIDEGRFSQVDEFQCMPHFSRYSWGLFRHRTKLLCRKCNNYIGNASQEKAPEYALVTQNSDPTSPRIGSVTKYDIRIRSLQPSSAVALL.

The transit peptide at 1–60 (MERSASVGVNDGRFGGNQFYSPSFSSSSSSSSMRHVNYSCGSCGYELNLSSTNRITSTIG) directs the protein to the chloroplast.

The protein localises to the plastid. It is found in the chloroplast. This is an uncharacterized protein from Arabidopsis thaliana (Mouse-ear cress).